The following is a 282-amino-acid chain: Putative 4-diphosphocytidyl-2-C-methyl-D-erythritol kinase (282 aa).

Lysine 9 is a catalytic residue. 93 to 103 (PVSAGLAGGSA) lines the ATP pocket. Aspartate 135 is a catalytic residue.

It belongs to the GHMP kinase family. IspE subfamily.

It catalyses the reaction 4-CDP-2-C-methyl-D-erythritol + ATP = 4-CDP-2-C-methyl-D-erythritol 2-phosphate + ADP + H(+). Functionally, catalyzes the phosphorylation of the position 2 hydroxy group of 4-diphosphocytidyl-2C-methyl-D-erythritol. In Staphylococcus haemolyticus (strain JCSC1435), this protein is Putative 4-diphosphocytidyl-2-C-methyl-D-erythritol kinase.